Reading from the N-terminus, the 662-residue chain is LIM domain kinase 1 (662 aa).

2 LIM zinc-binding domains span residues Pro-24–Glu-83 and Leu-84–Thr-145. The PDZ domain occupies Leu-166–Pro-259. The disordered stretch occupies residues Pro-262–Ser-328. Residues Ser-272–Ala-287 show a composition bias toward pro residues. A compositionally biased stretch (low complexity) spans Ser-309–Ser-320. One can recognise a Protein kinase domain in the interval Leu-346–Leu-611. Residues Leu-352 to Ala-360 and Lys-375 each bind ATP. Residue Asp-467 is part of the active site.

This sequence belongs to the protein kinase superfamily. TKL Ser/Thr protein kinase family. As to expression, expressed predominantly in the brain.

Its subcellular location is the cytoplasm. The protein localises to the nucleus. The protein resides in the cytoskeleton. It is found in the cell projection. It localises to the growth cone. The enzyme catalyses L-seryl-[protein] + ATP = O-phospho-L-seryl-[protein] + ADP + H(+). It catalyses the reaction L-threonyl-[protein] + ATP = O-phospho-L-threonyl-[protein] + ADP + H(+). In terms of biological role, protein kinase which regulates actin filament dynamics. Phosphorylates and inactivates the actin binding/depolymerizing factor cofilin, thereby stabilizing the actin cytoskeleton. Required for motility of the axon growth cone. In Gallus gallus (Chicken), this protein is LIM domain kinase 1 (LIMK1).